The following is a 537-amino-acid chain: uncharacterized protein (537 aa).

A disordered region spans residues 10-56 (HHDVEPQNVEEEPPLTGQTIVTEDKLETSAKDKKHESPSMSEDEEGS). Positions 31–46 (TEDKLETSAKDKKHES) are enriched in basic and acidic residues. 12 helical membrane passes run 90–110 (FVAT…TACI), 133–153 (LFIV…DIFG), 156–176 (WVYV…ALAY), 180–200 (MMAI…ANVA), 213–233 (GFGI…GSPI), 243–263 (WFYW…VLCP), 313–333 (PIIM…FLYL), 348–368 (YMGA…VVML), 393–413 (FLIS…FAFT), 422–442 (SPLI…LAMI), 457–477 (IAAF…LGII), and 492–512 (AFIS…GHLI).

This sequence belongs to the major facilitator superfamily. CAR1 family.

The protein resides in the endoplasmic reticulum. It localises to the golgi apparatus. Its subcellular location is the membrane. This is an uncharacterized protein from Schizosaccharomyces pombe (strain 972 / ATCC 24843) (Fission yeast).